The primary structure comprises 470 residues: 3-isopropylmalate dehydratase large subunit (470 aa).

Positions 351, 411, and 414 each coordinate [4Fe-4S] cluster.

It belongs to the aconitase/IPM isomerase family. LeuC type 1 subfamily. In terms of assembly, heterodimer of LeuC and LeuD. The cofactor is [4Fe-4S] cluster.

The enzyme catalyses (2R,3S)-3-isopropylmalate = (2S)-2-isopropylmalate. The protein operates within amino-acid biosynthesis; L-leucine biosynthesis; L-leucine from 3-methyl-2-oxobutanoate: step 2/4. In terms of biological role, catalyzes the isomerization between 2-isopropylmalate and 3-isopropylmalate, via the formation of 2-isopropylmaleate. The sequence is that of 3-isopropylmalate dehydratase large subunit from Rhodopseudomonas palustris (strain HaA2).